The following is an 885-amino-acid chain: Exosome complex component 10 (885 aa).

The segment covering 1–10 (MAPPSPREHQ) has biased composition (basic and acidic residues). Disordered regions lie at residues 1-23 (MAPP…PDAE) and 210-232 (KPLP…EDLD). A Glycyl lysine isopeptide (Lys-Gly) (interchain with G-Cter in SUMO2) cross-link involves residue Lys-19. Over residues 217 to 230 (SKERRERPQDRPED) the composition is skewed to basic and acidic residues. The region spanning 289–455 (HVVSSLDELV…YIYDRMRLEL (167 aa)) is the 3'-5' exonuclease domain. Mg(2+) contacts are provided by Asp-313, Glu-315, Asp-371, and Asp-440. Residues 503–583 (NSQQLTAFQL…QQAREMPLLK (81 aa)) form the HRDC domain. Residue Lys-583 forms a Glycyl lysine isopeptide (Lys-Gly) (interchain with G-Cter in SUMO1); alternate linkage. Lys-583 is covalently cross-linked (Glycyl lysine isopeptide (Lys-Gly) (interchain with G-Cter in SUMO2); alternate). Residue Lys-710 forms a Glycyl lysine isopeptide (Lys-Gly) (interchain with G-Cter in SUMO2) linkage. The segment at 730 to 885 (VQKEPKEAAK…RGFRHNWPKR (156 aa)) is disordered. Composition is skewed to basic and acidic residues over residues 732–756 (KEPK…KEES) and 776–794 (ATKK…EQKQ). Ser-821 is subject to Phosphoserine. Residues Lys-833, Lys-859, and Lys-873 each participate in a glycyl lysine isopeptide (Lys-Gly) (interchain with G-Cter in SUMO2) cross-link.

Belongs to the exosome component 10/RRP6 family. As to quaternary structure, component of the RNA exosome complex. The catalytically inactive RNA exosome core complex (Exo-9) associates with the catalytic subunit EXOSC10/RRP6 (via its N-terminus). Exo-9 may associate with DIS3 to form the nucleolar exosome complex, or DIS3L to form the cytoplasmic exosome complex. The RNA exosome complex interacts with cofactors C1D/RRP47, MPHOSPH6/MPP6 and MTREX/MTR4. Interacts with MTREX; the interaction with MTREX mediates the association of MTREX with nuclear RNA exosomes. Part of the small subunit (SSU) processome, composed of more than 70 proteins and the RNA chaperone small nucleolar RNA (snoRNA) U3. Interacts with ALYREF/THOC4. Interacts with DHX36; this interaction occurs in a RNase-insensitive manner. Interacts with NRDE2. Interacts (via C-terminus) with USP36 (via C-terminus); the interaction is facilitated by the association with RNA and promotes sumoylation of EXOSC10. Requires Mg(2+) as cofactor. In terms of processing, sumoylated by USP36; sumoylation does not significantly affect EXOSC10 nucleolar localization and association with core exosome and USP36, but regulates the nucleolar RNA exosome activity in rRNA processing by promoting binding of EXOSC10 to pre-rRNAs. Effects of sumoylation on EXOSC10 levels vary between different studies. Sumoylation of EXOSC10 is required for the modulation of EXOSC10 effects on cellular protein translation and cell proliferation. Sumoylation is promoted by mild hypothermia. In terms of tissue distribution, expressed in testis (at protein level).

The protein resides in the cytoplasm. It localises to the nucleus. Its subcellular location is the nucleolus. It is found in the nucleoplasm. Catalytic component of the RNA exosome complex which has 3'-&gt;5' exoribonuclease activity and participates in a multitude of cellular RNA processing and degradation events. In the nucleus, the RNA exosome complex is involved in proper maturation of stable RNA species such as rRNA, snRNA and snoRNA, in the elimination of RNA processing by-products and non-coding 'pervasive' transcripts, such as antisense RNA species and promoter-upstream transcripts (PROMPTs), and of mRNAs with processing defects, thereby limiting or excluding their export to the cytoplasm. Part of the small subunit (SSU) processome, first precursor of the small eukaryotic ribosomal subunit. During the assembly of the SSU processome in the nucleolus, many ribosome biogenesis factors, an RNA chaperone and ribosomal proteins associate with the nascent pre-rRNA and work in concert to generate RNA folding, modifications, rearrangements and cleavage as well as targeted degradation of pre-ribosomal RNA by the RNA exosome. The RNA exosome may be involved in Ig class switch recombination (CSR) and/or Ig variable region somatic hypermutation (SHM) by targeting AICDA deamination activity to transcribed dsDNA substrates. In the cytoplasm, the RNA exosome complex is involved in general mRNA turnover and specifically degrades inherently unstable mRNAs containing AU-rich elements (AREs) within their 3' untranslated regions, and in RNA surveillance pathways, preventing translation of aberrant mRNAs. It seems to be involved in degradation of histone mRNA. EXOSC10 is required for nucleolar localization of C1D and probably mediates the association of MTREX, C1D and MPHOSPH6 with the RNA exosome involved in the maturation of 5.8S rRNA. Plays a role in the recruitment of replication protein A complex (RPA) and RAD51 to DNA double-strand breaks caused by irradiation, contributing to DNA repair by homologous recombination. Regulates levels of damage-induced RNAs in order to prevent DNA-RNA hybrid formation at DNA double-strand breaks and limit DNA end resection after damage. Plays a role in oocyte development, maturation and survival. Required for normal testis development and mitotic division of spermatogonia. Plays a role in proper embryo development. Required for global protein translation. Required for cell proliferation. This Rattus norvegicus (Rat) protein is Exosome complex component 10.